We begin with the raw amino-acid sequence, 564 residues long: Probable lysosomal cobalamin transporter (564 aa).

Transmembrane regions (helical) follow at residues 8-28 (LIWSVYGVAIAILIAVASTFI), 41-61 (VTLICIISITVLLATVLLLPV), 94-114 (TIVYYSLYTVDALLCLIGIPF), 144-164 (YTLFFVAILIVLFLVGFFIPT), 188-208 (ALTFSVGILTTLGLSLYIIYT), 312-332 (LLAGFVLLLAALFLWTSLCVT), 375-395 (VIFTLIVLFLFCSSVVGIAAF), 418-438 (LLLTSMLMLITLALNYSVAVI), and 506-526 (FFGAVFFWAQFIFLGLYLLVL).

The protein belongs to the LIMR family. LMBRD1 subfamily.

It localises to the lysosome membrane. Probable lysosomal cobalamin transporter. Required to export cobalamin from lysosomes allowing its conversion to cofactors. This is Probable lysosomal cobalamin transporter from Aspergillus clavatus (strain ATCC 1007 / CBS 513.65 / DSM 816 / NCTC 3887 / NRRL 1 / QM 1276 / 107).